The primary structure comprises 249 residues: Metal-staphylopine import system ATP-binding protein CntF (249 aa).

The ABC transporter domain maps to 2 to 244 (IKVTDVEKSY…DNAYTRELIE (243 aa)). 42 to 49 (GESGSGKS) is a binding site for ATP.

The protein belongs to the ABC transporter superfamily. As to quaternary structure, the complex is composed of two ATP-binding proteins (CntD and CntF), two transmembrane proteins (CntB and CntC) and a solute-binding protein (CntA).

The protein resides in the cell membrane. Functionally, part of the ABC transporter complex CntABCDF (Opp1) involved in the uptake of metal in complex with the metallophore staphylopine (StP). May be involved in the import of a large array of divalent metals ions such as nickel, cobalt, zinc, copper and iron. Probably responsible for energy coupling to the transport system. This is Metal-staphylopine import system ATP-binding protein CntF from Staphylococcus aureus (strain Mu50 / ATCC 700699).